Reading from the N-terminus, the 520-residue chain is Cell division control protein 3 (520 aa).

Residues M1–F24 show a composition bias toward basic and acidic residues. Residues M1–L83 form a disordered region. Residue S2 is modified to N-acetylserine. S2 is modified (phosphoserine). Residue K4 forms a Glycyl lysine isopeptide (Lys-Gly) (interchain with G-Cter in SUMO) linkage. The residue at position 9 (S9) is a Phosphoserine. Residues K11 and K30 each participate in a glycyl lysine isopeptide (Lys-Gly) (interchain with G-Cter in SUMO) cross-link. T47 carries the post-translational modification Phosphothreonine. Positions D51–V64 are enriched in basic and acidic residues. The residue at position 60 (S60) is a Phosphoserine. A Glycyl lysine isopeptide (Lys-Gly) (interchain with G-Cter in SUMO) cross-link involves residue K63. Position 77 is a phosphoserine (S77). One can recognise a Septin-type G domain in the interval N116–K411. Residues G126–T133 are G1 motif. G126–T133 lines the GTP pocket. Residues E156–Q167 show a composition bias toward acidic residues. Positions E156–K181 are disordered. Over residues G168–R179 the composition is skewed to basic and acidic residues. Position 175 is a phosphoserine (S175). A G3 motif region spans residues D204–G207. Residues G207, K287–E295, G344, and R360 each bind GTP. Positions A286–D289 are G4 motif. A Glycyl lysine isopeptide (Lys-Gly) (interchain with G-Cter in SUMO) cross-link involves residue K287. Residues I427–H508 adopt a coiled-coil conformation. The residue at position 468 (T468) is a Phosphothreonine. Residues E496 to R520 are disordered. Over residues L497–P510 the composition is skewed to polar residues. S509 carries the post-translational modification Phosphoserine.

Belongs to the TRAFAC class TrmE-Era-EngA-EngB-Septin-like GTPase superfamily. Septin GTPase family. As to quaternary structure, component of the septin complex which consists of CDC3, CDC10, CDC11, CDC12 and probably SHS1 and rearranges to a cortical collar of highly ordered filaments at the mother-bud-neck. A complex formed by CDC3, CDC10, CDC11 and CDC12 is capable of forming long filaments in vitro and the components seem to be present in a 2:2:2:2 arrangement in vivo. The filaments are proposed to be formed by the end-to-end polymerization of CDC3-CDC12-CDC11 complexes with CDC10 serving as a bridge to bundle the polymers into paired filaments. Component of the GIN4 complex composed of at least BNI5, CDC3, CDC10, CDC11, CDC12, GIN4, NAP1 and SHS1. Self-associates. Interacts with SIZ1 and SYP1. In terms of processing, phosphorylated by CDC28. Phosphorylation at the end of G1 may facilitate initiation of a new cell cycle by promoting disassembly of the obsolete septin ring from the previous cell cycle. Post-translationally, sumoylated during mitosis on the mother cell side of the bud neck by UBC9/SIZ1. Sumoylation probably plays a central role in regulating septin ring disassembly during the cell cycle.

It is found in the membrane. It localises to the bud neck. Functionally, septins are GTPases involved in cytokinesis that assemble early in the cell cycle as a patch at the incipient bud site and form a ring approximate 15 minutes before bud emergence, which transforms into an hour-glass shaped collar of cortical filaments that spans both sides of the mother-bud neck. This collar persists until just before cytokinesis, when it splits into two rings that occupy opposite sides of the neck. The septins at the bud neck serve as a structural scaffold that recruits different components involved in diverse processes at specific stages during the cell cycle. Many proteins bind asymmetrically to the septin collar. The septin assembly is regulated by protein kinases GIN4 and/or CLA4. May act by recruiting MYO1 and HOF1, a protein involved in septation, to the site of cleavage. Septins are also involved in cell morphogenesis, bud site selection, chitin deposition, cell cycle regulation, cell compartmentalization and spore wall formation. This Saccharomyces cerevisiae (strain ATCC 204508 / S288c) (Baker's yeast) protein is Cell division control protein 3 (CDC3).